A 626-amino-acid chain; its full sequence is Nuclear receptor subfamily 4 group A member 3 (626 aa).

An activation function (AF)-1 domain region spans residues 1 to 108 (MPCVQAQYSP…HHHHHHHHHH (108 aa)). The tract at residues 1 to 138 (MPCVQAQYSP…PSTSMYFKQS (138 aa)) is required for DNA-PK heterotrimer. Residues 1-291 (MPCVQAQYSP…SRSSSSGEGT (291 aa)) are interaction with NCOA1, NCOA2, NCOA3 and KAT2B. Disordered regions lie at residues 92-152 (PSYH…PPQA), 192-211 (HFKP…GHHL), and 265-284 (PTAS…PSRS). Basic residues predominate over residues 93 to 110 (SYHHHHHHHHHHHHHHQQ). Composition is skewed to pro residues over residues 140–149 (PSTPTTPAFP) and 195–204 (PSPPHPPAPS). Residues 268 to 284 (SSLLGESPSLPSPPSRS) are compositionally biased toward low complexity. Positions 289–364 (EGTCAVCGDN…VGMVKEVVRT (76 aa)) form a DNA-binding region, nuclear receptor. 2 consecutive NR C4-type zinc fingers follow at residues 292–312 (CAVC…CEGC) and 328–352 (CLAN…FQKC). Residues 364–394 (TDSLKGRRGRLPSKPKSPLQQEPSQPSPPSP) form a disordered region. A compositionally biased stretch (low complexity) spans 377-387 (KPKSPLQQEPS). The tract at residues 379-626 (KSPLQQEPSQ…DKLFLDTLPF (248 aa)) is interaction with KAT2B. Residues 394-623 (PPICMMNALV…SIIDKLFLDT (230 aa)) enclose the NR LBD domain.

Belongs to the nuclear hormone receptor family. NR4 subfamily. In terms of assembly, interacts with SIX3 (via homeobox); differentially regulates the transcriptional activities of NR4A3. Interacts with the constituents of DNA-PK heterotrimer PRKDC, XRCC6 and XRCC5; phosphorylates and prevents NR4A3 ubiquitinylation and degradation. Interacts with NCOA2; potentiates the activity of the NR4A3. Interacts with NCOA1, NCOA3, MED1 and KAT2B. Interacts with EP300 and NCOA2; mediates the recruitment of MED1 in the coactivator complex. Interacts with NR3C1 (via nuclear receptor DNA-binding domain); the interactions represses transcription activity of NR4A3 on the POMC promoter Nur response element (NurRE). Interacts with TRIM28; the interactions potentiates NR4A3 activity on NurRE promoter. Binds DNA as a monomer and homodimer. Interacts with PARP1; activates PARP1 by improving acetylation of PARP1 and suppressing the interaction between PARP1 and SIRT1. Post-translationally, phosphorylated by PRKDC. Isoform alpha is highly expressed in skeletal muscle. Isoform beta is highly expressed in skeletal muscle and low expressed in fetal brain and placenta.

The protein localises to the nucleus. In terms of biological role, transcriptional activator that binds to regulatory elements in promoter regions in a cell- and response element (target)-specific manner. Induces gene expression by binding as monomers to the NR4A1 response element (NBRE) 5'-AAAAGGTCA-3' site and as homodimers to the Nur response element (NurRE) site in the promoter of their regulated target genes. Plays a role in the regulation of proliferation, survival and differentiation of many different cell types and also in metabolism and inflammation. Mediates proliferation of vascular smooth muscle, myeloid progenitor cell and type B pancreatic cells; promotes mitogen-induced vascular smooth muscle cell proliferation through transactivation of SKP2 promoter by binding a NBRE site. Upon PDGF stimulation, stimulates vascular smooth muscle cell proliferation by regulating CCND1 and CCND2 expression. In islets, induces type B pancreatic cell proliferation through up-regulation of genes that activate cell cycle, as well as genes that cause degradation of the CDKN1A. Negatively regulates myeloid progenitor cell proliferation by repressing RUNX1 in a NBRE site-independent manner. During inner ear, plays a role as a key mediator of the proliferative growth phase of semicircular canal development. Also mediates survival of neuron and smooth muscle cells; mediates CREB-induced neuronal survival, and during hippocampus development, plays a critical role in pyramidal cell survival and axonal guidance. Is required for S phase entry of the cell cycle and survival of smooth muscle cells by inducing CCND1, resulting in RB1 phosphorylation. Binds to NBRE motif in CCND1 promoter, resulting in the activation of the promoter and CCND1 transcription. Also plays a role in inflammation; upon TNF stimulation, mediates monocyte adhesion by inducing the expression of VCAM1 and ICAM1 by binding to the NBRE consensus site. In mast cells activated by Fc-epsilon receptor cross-linking, promotes the synthesis and release of cytokines but impairs events leading to degranulation. Also plays a role in metabolism; by modulating feeding behavior; and by playing a role in energy balance by inhibiting the glucocorticoid-induced orexigenic neuropeptides AGRP expression, at least in part by forming a complex with activated NR3C1 on the AGRP- glucocorticoid response element (GRE), and thus weakening the DNA binding activity of NR3C1. Upon catecholamines stimulation, regulates gene expression that controls oxidative metabolism in skeletal muscle. Plays a role in glucose transport by regulating translocation of the SLC2A4 glucose transporter to the cell surface. Finally, during gastrulation plays a crucial role in the formation of anterior mesoderm by controlling cell migration. Inhibits adipogenesis. Also participates in cardiac hypertrophy by activating PARP1. This is Nuclear receptor subfamily 4 group A member 3 (NR4A3) from Homo sapiens (Human).